A 478-amino-acid polypeptide reads, in one-letter code: MTRIKINARRIFSLLIPFFFFTSVHAEQTAAPAKPVTVEAKNETFAPQHHDQYLSWKATSEQSERVDALAEDPRLVILWAGYPFSRDYNKPRGHAFAVTDVRETLRTGAPKNAEDGPLPMACWSCKSPDVARLIQKDGEDGYFHGKWARGGPEIVNNLGCADCHNTASPEFAKGKPELTLSRPYAARAMEAIGKPFEKAGRFDQQSMVCGQCHVEYYFDGKNKAVKFPWDDGMKVENMEQYYDKIAFSDWTNSLSKTPMLKAQHPEYETWTAGIHGKNNVTCIDCHMPKVQNAEGKLYTDHKIGNPFDNFAQTCANCHTQDKAALQKVVAERKQSINDLKIKVEDQLVHAHFEAKAALDAGATEAEMKPIQDDIRHAQWRWDLAIASHGIHMHAPEEGLRMLGTAMDKAADARTKLARLLATKGITHEIQIPDISTKEKAQQAIGLNMEQIKAEKQDFIKTVIPQWEEQARKNGLLSQ.

The N-terminal stretch at 1–26 (MTRIKINARRIFSLLIPFFFFTSVHA) is a signal peptide. Heme c is bound at residue histidine 94. Heme is bound by residues cysteine 122, cysteine 125, and lysine 126. Heme c is bound by residues cysteine 160, cysteine 163, histidine 164, cysteine 209, cysteine 212, and histidine 213. The Ca(2+) site is built by glutamate 215, tyrosine 216, lysine 261, and glutamine 263. Tyrosine 216 contacts substrate. Histidine 264 is a binding site for substrate. Heme c-binding residues include histidine 275, cysteine 282, cysteine 285, histidine 286, histidine 301, cysteine 314, cysteine 317, histidine 318, and histidine 393.

Belongs to the cytochrome c-552 family. Ca(2+) serves as cofactor. Requires heme c as cofactor.

The protein localises to the periplasm. The enzyme catalyses 6 Fe(III)-[cytochrome c] + NH4(+) + 2 H2O = 6 Fe(II)-[cytochrome c] + nitrite + 8 H(+). It participates in nitrogen metabolism; nitrate reduction (assimilation). Catalyzes the reduction of nitrite to ammonia, consuming six electrons in the process. The sequence is that of Cytochrome c-552 from Shigella flexneri.